Here is a 210-residue protein sequence, read N- to C-terminus: Pyridoxine/pyridoxamine 5'-phosphate oxidase (210 aa).

Residues 7 to 10 and lysine 65 contribute to the substrate site; that span reads RDEY. FMN contacts are provided by residues 60–65, 75–76, arginine 81, lysine 82, and glutamine 104; these read RMVLLK and FT. Residues tyrosine 122, arginine 126, and serine 130 each contribute to the substrate site. FMN is bound by residues 139–140 and tryptophan 183; that span reads QS. 189 to 191 provides a ligand contact to substrate; sequence RLH. Position 193 (arginine 193) interacts with FMN.

Belongs to the pyridoxamine 5'-phosphate oxidase family. As to quaternary structure, homodimer. It depends on FMN as a cofactor.

The catalysed reaction is pyridoxamine 5'-phosphate + O2 + H2O = pyridoxal 5'-phosphate + H2O2 + NH4(+). It carries out the reaction pyridoxine 5'-phosphate + O2 = pyridoxal 5'-phosphate + H2O2. It participates in cofactor metabolism; pyridoxal 5'-phosphate salvage; pyridoxal 5'-phosphate from pyridoxamine 5'-phosphate: step 1/1. The protein operates within cofactor metabolism; pyridoxal 5'-phosphate salvage; pyridoxal 5'-phosphate from pyridoxine 5'-phosphate: step 1/1. In terms of biological role, catalyzes the oxidation of either pyridoxine 5'-phosphate (PNP) or pyridoxamine 5'-phosphate (PMP) into pyridoxal 5'-phosphate (PLP). This chain is Pyridoxine/pyridoxamine 5'-phosphate oxidase, found in Haemophilus influenzae (strain ATCC 51907 / DSM 11121 / KW20 / Rd).